We begin with the raw amino-acid sequence, 124 residues long: Large ribosomal subunit protein eL22y (124 aa).

It belongs to the eukaryotic ribosomal protein eL22 family.

The polypeptide is Large ribosomal subunit protein eL22y (RPL22C) (Arabidopsis thaliana (Mouse-ear cress)).